A 412-amino-acid polypeptide reads, in one-letter code: Inositol polyphosphate-5-phosphatase A (412 aa).

Residue cysteine 409 is the site of S-farnesyl cysteine attachment. A propeptide spans 410-412 (VVQ) (removed in mature form).

This sequence belongs to the inositol 1,4,5-trisphosphate 5-phosphatase type I family. In terms of assembly, interacts with TASOR. Isoprenylation at Cys-409 is required for localization at the membrane.

Its subcellular location is the cell membrane. It is found in the cell projection. The protein localises to the dendrite. The catalysed reaction is 1D-myo-inositol 1,4,5-trisphosphate + H2O = 1D-myo-inositol 1,4-bisphosphate + phosphate. It carries out the reaction 1D-myo-inositol 1,3,4,5-tetrakisphosphate + H2O = 1D-myo-inositol 1,3,4-trisphosphate + phosphate. With respect to regulation, inhibited by EDTA and 2,3-bisphosphoglycerate. In terms of biological role, phosphatase that specifically hydrolyzes the 5-phosphate of inositol 1,4,5-trisphosphate to inositol 1,4-bisphosphate, and inositol 1,3,4,5-tetrasphosphate to inositol 1,3,4-trisphosphate. Plays a crucial role in the survival of cerebellar Purkinje cells. This is Inositol polyphosphate-5-phosphatase A (INPP5A) from Canis lupus familiaris (Dog).